Reading from the N-terminus, the 192-residue chain is Fe/S biogenesis protein NfuA (192 aa).

C150 and C153 together coordinate [4Fe-4S] cluster.

This sequence belongs to the NfuA family. As to quaternary structure, homodimer. It depends on [4Fe-4S] cluster as a cofactor.

Involved in iron-sulfur cluster biogenesis. Binds a 4Fe-4S cluster, can transfer this cluster to apoproteins, and thereby intervenes in the maturation of Fe/S proteins. Could also act as a scaffold/chaperone for damaged Fe/S proteins. The polypeptide is Fe/S biogenesis protein NfuA (Buchnera aphidicola subsp. Acyrthosiphon pisum (strain 5A)).